Reading from the N-terminus, the 313-residue chain is MNTFSQVWVFSDTPSRLPELMNGAQALANQINTFVLNDADGAQAIQLGANHVWKLNGKPDDRMIEDYAGVMADTIRQHGADGLVLLPNTRRGKLLAAKLGYRLKAAVSNDASTVSVQDGKATVKHMVYGGLAIGEERIATPYAVLTISSGTFDAAQPDASRTGETHTVEWQAPAVAITRTATQARQSNSVDLDKARLVVSVGRGIGSKENIALAEQLCKAIGAELACSRPVAENEKWMEHERYVGISNLMLKPELYLAVGISGQIQHMVGANASQTIFAINKDKNAPIFQYADYGIVGDAVKILPALTAALAR.

Leucine 255–aspartate 283 provides a ligand contact to FAD.

Belongs to the ETF alpha-subunit/FixB family. In terms of assembly, heterodimer of FixA and FixB.

Its pathway is amine and polyamine metabolism; carnitine metabolism. Its function is as follows. Required for anaerobic carnitine reduction. May bring reductant to CaiA. This is Protein FixB from Escherichia coli (strain K12 / MC4100 / BW2952).